Reading from the N-terminus, the 498-residue chain is Type II secretion system protein E (498 aa).

Zn(2+)-binding residues include cysteine 394, cysteine 397, cysteine 425, and cysteine 428.

This sequence belongs to the GSP E family. As to quaternary structure, forms homooligomers; most probably hexamers. Interacts with OutL/GspL. Requires Zn(2+) as cofactor.

Its subcellular location is the cell inner membrane. It carries out the reaction ATP + H2O + cellular proteinSide 1 = ADP + phosphate + cellular proteinSide 2.. In terms of biological role, ATPase component of the type II secretion system required for the energy-dependent secretion of extracellular factors such as proteases and toxins from the periplasm. Acts as a molecular motor to provide the energy that is required for assembly of the pseudopilus and the extrusion of substrates generated in the cytoplasm. This is Type II secretion system protein E (outE) from Dickeya dadantii (strain 3937) (Erwinia chrysanthemi (strain 3937)).